The following is a 280-amino-acid chain: Pantothenate synthetase (280 aa).

M26–H33 contacts ATP. Catalysis depends on H33, which acts as the Proton donor. Q57 serves as a coordination point for (R)-pantoate. Q57 provides a ligand contact to beta-alanine. An ATP-binding site is contributed by G147 to D150. Q153 provides a ligand contact to (R)-pantoate. L184 to R187 lines the ATP pocket.

Belongs to the pantothenate synthetase family. As to quaternary structure, homodimer.

Its subcellular location is the cytoplasm. It carries out the reaction (R)-pantoate + beta-alanine + ATP = (R)-pantothenate + AMP + diphosphate + H(+). The protein operates within cofactor biosynthesis; (R)-pantothenate biosynthesis; (R)-pantothenate from (R)-pantoate and beta-alanine: step 1/1. In terms of biological role, catalyzes the condensation of pantoate with beta-alanine in an ATP-dependent reaction via a pantoyl-adenylate intermediate. The protein is Pantothenate synthetase of Verminephrobacter eiseniae (strain EF01-2).